A 389-amino-acid chain; its full sequence is Na(+)/H(+) antiporter NhaA (389 aa).

Transmembrane regions (helical) follow at residues 17 to 37 (ILLL…LAGL), 59 to 79 (LLLW…GLEV), 95 to 115 (SLPT…YLLF), 124 to 144 (AGWA…MALL), 154 to 174 (VFLL…IALF), 177 to 197 (TDLS…LVAL), 213 to 233 (LVLW…GVII), 261 to 281 (FLIL…NMSL), 287 to 307 (PVPV…VMLF), 328 to 348 (IAPV…IASL), and 363 to 383 (LGTL…LSKV).

Belongs to the NhaA Na(+)/H(+) (TC 2.A.33) antiporter family.

Its subcellular location is the cell inner membrane. The catalysed reaction is Na(+)(in) + 2 H(+)(out) = Na(+)(out) + 2 H(+)(in). Functionally, na(+)/H(+) antiporter that extrudes sodium in exchange for external protons. The polypeptide is Na(+)/H(+) antiporter NhaA (Shewanella sp. (strain MR-4)).